The following is a 235-amino-acid chain: Tetraspanin-8 (235 aa).

Residues 1 to 12 (MAGVSSCLKYSM) are Cytoplasmic-facing. A helical membrane pass occupies residues 13-33 (FFFNFLFWVCGTLILGLAIWV). The Extracellular segment spans residues 34–52 (RVSKDGKEIITSGDSSTNP). The helical transmembrane segment at 53–73 (FIAVNILIAVGSIIMVLGFLG) threads the bilayer. Topologically, residues 74–84 (CCGAVKESRCM) are cytoplasmic. The helical transmembrane segment at 85–105 (LLLFFIGLLLILILQVAAGIL) threads the bilayer. Over 106–203 (GAAFKPEYNR…SLIKDLFEKN (98 aa)) the chain is Extracellular. N118 carries N-linked (GlcNAc...) asparagine glycosylation. Residues 204-224 (IIIVIGIAFGLAVIEILGLVF) form a helical membrane-spanning segment. The Cytoplasmic segment spans residues 225 to 235 (SMVLYCQIGSK).

This sequence belongs to the tetraspanin (TM4SF) family. As to quaternary structure, forms homooligomers. Interacts with MEP1B. Interacts with integrin alpha3/ITGA3. Interacts with RICTOR and MTOR. Interacts with ADAM17. Interacts with ECE1.

Its subcellular location is the cell membrane. Structural component of specialized membrane microdomains known as tetraspanin-enriched microdomains (TERMs), which act as platforms for receptor clustering and signaling. Participates thereby in diverse biological functions such as cell signal transduction, migration and protein trafficking. Promotes ADAM17-mediated TNF-alpha processing through recruitment of ADAM17 to tetraspanin-enriched micro-domains (TEMs). Forms a complex with RICTOR and integrin alpha3/ITGA3 to mediate mTORC2 activation and AKT1 phosphorylation leading to cell migration. Reduces apoptosis and autophagy induced by high glucose levels through forming a complex with mTOR and RICTOR. Contributes to the maintenance of intestinal epithelial barrier and plays a role in the regulation of intestine inflammation by switching interferon gamma receptor 1/IFNGR1 from clathrin-dependent to lipid raft-dependent endocytosis route to limit STAT1 activation magnitude and duration. Acts as a modulator of the endothelin axis by associating with endothelin converting enzyme ECE1 and regulating its activity of conversion of the endothelin-1 precursor to endothelin. This is Tetraspanin-8 (Tspan8) from Mus musculus (Mouse).